The sequence spans 486 residues: Ribosomal RNA small subunit methyltransferase F (486 aa).

S-adenosyl-L-methionine is bound by residues alanine 124–lysine 130, glutamate 148, aspartate 175, and aspartate 193. Catalysis depends on cysteine 246, which acts as the Nucleophile.

Belongs to the class I-like SAM-binding methyltransferase superfamily. RsmB/NOP family.

The protein localises to the cytoplasm. The enzyme catalyses cytidine(1407) in 16S rRNA + S-adenosyl-L-methionine = 5-methylcytidine(1407) in 16S rRNA + S-adenosyl-L-homocysteine + H(+). Specifically methylates the cytosine at position 1407 (m5C1407) of 16S rRNA. In Shewanella baltica (strain OS185), this protein is Ribosomal RNA small subunit methyltransferase F.